The chain runs to 439 residues: Xylose isomerase (439 aa).

Active-site residues include H101 and D104. Residues E232, E268, H271, D296, D307, D309, and D339 each contribute to the Mg(2+) site.

This sequence belongs to the xylose isomerase family. As to quaternary structure, homotetramer. It depends on Mg(2+) as a cofactor.

Its subcellular location is the cytoplasm. The catalysed reaction is alpha-D-xylose = alpha-D-xylulofuranose. This is Xylose isomerase from Yersinia pestis bv. Antiqua (strain Angola).